The sequence spans 120 residues: Large ribosomal subunit protein bL12 (120 aa).

The protein belongs to the bacterial ribosomal protein bL12 family. In terms of assembly, homodimer. Part of the ribosomal stalk of the 50S ribosomal subunit. Forms a multimeric L10(L12)X complex, where L10 forms an elongated spine to which 2 to 4 L12 dimers bind in a sequential fashion. Binds GTP-bound translation factors.

Its function is as follows. Forms part of the ribosomal stalk which helps the ribosome interact with GTP-bound translation factors. Is thus essential for accurate translation. The sequence is that of Large ribosomal subunit protein bL12 from Listeria monocytogenes serotype 4b (strain CLIP80459).